A 369-amino-acid polypeptide reads, in one-letter code: tRNA 2-selenouridine synthase (369 aa).

One can recognise a Rhodanese domain in the interval 12 to 136 (FLDDIPLMDV…LRNFLFETTR (125 aa)). The active-site S-selanylcysteine intermediate is C95.

It belongs to the SelU family. As to quaternary structure, monomer.

The catalysed reaction is 5-methylaminomethyl-2-thiouridine(34) in tRNA + selenophosphate + (2E)-geranyl diphosphate + H2O + H(+) = 5-methylaminomethyl-2-selenouridine(34) in tRNA + (2E)-thiogeraniol + phosphate + diphosphate. It carries out the reaction 5-methylaminomethyl-2-thiouridine(34) in tRNA + (2E)-geranyl diphosphate = 5-methylaminomethyl-S-(2E)-geranyl-thiouridine(34) in tRNA + diphosphate. It catalyses the reaction 5-methylaminomethyl-S-(2E)-geranyl-thiouridine(34) in tRNA + selenophosphate + H(+) = 5-methylaminomethyl-2-(Se-phospho)selenouridine(34) in tRNA + (2E)-thiogeraniol. The enzyme catalyses 5-methylaminomethyl-2-(Se-phospho)selenouridine(34) in tRNA + H2O = 5-methylaminomethyl-2-selenouridine(34) in tRNA + phosphate. Functionally, involved in the post-transcriptional modification of the uridine at the wobble position (U34) of tRNA(Lys), tRNA(Glu) and tRNA(Gln). Catalyzes the conversion of 2-thiouridine (S2U-RNA) to 2-selenouridine (Se2U-RNA). Acts in a two-step process involving geranylation of 2-thiouridine (S2U) to S-geranyl-2-thiouridine (geS2U) and subsequent selenation of the latter derivative to 2-selenouridine (Se2U) in the tRNA chain. This is tRNA 2-selenouridine synthase from Pseudomonas aeruginosa (strain ATCC 15692 / DSM 22644 / CIP 104116 / JCM 14847 / LMG 12228 / 1C / PRS 101 / PAO1).